The chain runs to 360 residues: sn-glycerol-3-phosphate import ATP-binding protein UgpC (360 aa).

One can recognise an ABC transporter domain in the interval 4–235 (LSLKGVRKSY…PATTFVASFI (232 aa)). Residue 37 to 44 (GPSGCGKS) participates in ATP binding.

This sequence belongs to the ABC transporter superfamily. sn-glycerol-3-phosphate importer (TC 3.A.1.1.3) family. In terms of assembly, the complex is composed of two ATP-binding proteins (UgpC), two transmembrane proteins (UgpA and UgpE) and a solute-binding protein (UgpB).

It localises to the cell inner membrane. It catalyses the reaction sn-glycerol 3-phosphate(out) + ATP + H2O = sn-glycerol 3-phosphate(in) + ADP + phosphate + H(+). In terms of biological role, part of the ABC transporter complex UgpBAEC involved in sn-glycerol-3-phosphate (G3P) import. Responsible for energy coupling to the transport system. This is sn-glycerol-3-phosphate import ATP-binding protein UgpC from Burkholderia pseudomallei (strain 1710b).